Here is a 419-residue protein sequence, read N- to C-terminus: DNA ligase (419 aa).

An NTD region spans residues 1-120 (MLNQFPGQYS…ARQKRGAHTN (120 aa)). Residues 121–317 (RGMIPPMLVK…NYHSAHLAKL (197 aa)) form an AD domain region. Glutamine 149, lysine 151, glutamate 203, and phenylalanine 232 together coordinate ATP. The N6-AMP-lysine intermediate role is filled by lysine 151. Glutamate 203 is a binding site for a divalent metal cation. Glutamate 291 provides a ligand contact to a divalent metal cation. Residues isoleucine 294 and lysine 316 each coordinate ATP. The segment at 318-419 (KPLLDAEFIL…REPINVLEII (102 aa)) is OB domain.

This sequence belongs to the ATP-dependent DNA ligase family. A divalent metal cation is required as a cofactor.

It is found in the virion. It carries out the reaction ATP + (deoxyribonucleotide)n-3'-hydroxyl + 5'-phospho-(deoxyribonucleotide)m = (deoxyribonucleotide)n+m + AMP + diphosphate.. In terms of biological role, very low-fidelity DNA ligase that seals nicks in double-stranded DNA during DNA repair. Together with the viral repair DNA polymerase X, fills the single nucleotide gaps generated by the AP endonuclease. It is not essential for viral replication and recombination. Displays a very low adenylation activity towards DNA with 3'-dideoxy- or 3'-amino-terminated nicks compared to regular nick DNA. This Ornithodoros (relapsing fever ticks) protein is DNA ligase (LIG).